The sequence spans 519 residues: Histidine--tRNA ligase, cytoplasmic (519 aa).

Residues 135–137, Arg162, Gln178, Asp182, Arg331, and 335–336 each bind L-histidine; these read DLT and YY.

Belongs to the class-II aminoacyl-tRNA synthetase family. Homodimer.

The protein resides in the cytoplasm. It carries out the reaction tRNA(His) + L-histidine + ATP = L-histidyl-tRNA(His) + AMP + diphosphate + H(+). Its function is as follows. Catalyzes the ATP-dependent ligation of histidine to the 3'-end of its cognate tRNA, via the formation of an aminoacyl-adenylate intermediate (His-AMP). Plays a role in axon guidance. The sequence is that of Histidine--tRNA ligase, cytoplasmic (hars1) from Takifugu rubripes (Japanese pufferfish).